A 935-amino-acid chain; its full sequence is Progesterone receptor (935 aa).

The interval 1-164 (MTELKAKGPR…PATQGVLSPL (164 aa)) is AF3; mediates transcriptional activation. Residues 1–254 (MTELKAKGPR…GGAAAGGGAA (254 aa)) form a disordered region. The modulating, Pro-Rich stretch occupies residues 1 to 568 (MTELKAKGPR…YSFESLPQKI (568 aa)). Position 20 is a phosphoserine (Ser-20). Positions 55–59 (LDGLL) match the LXXL motif 1 motif. Ser-81 bears the Phosphoserine mark. An LXXL motif 2 motif is present at residues 115 to 119 (LDTLL). A phosphoserine mark is found at Ser-130 and Ser-162. Residues 165 to 305 (MSRSGGKAGD…LATTVMDFIH (141 aa)) are mediates transcriptional transrepression. Positions 183 to 187 (KVLPR) match the Nuclear localization signal motif. Residues Ser-190 and Ser-213 each carry the phosphoserine modification. Positions 220–231 (EVEEEDGSESED) are enriched in acidic residues. The segment covering 232 to 246 (SAGPLLKGKPRALGG) has biased composition (low complexity). Ser-294 is modified (phosphoserine; by MAPK1). A disordered region spans residues 331 to 378 (GGAGAASAFAPPRSSPSASSTPVAVGDFPDCAYPPDAEPKDDAYPLYS). Residues 335 to 350 (AASAFAPPRSSPSASS) show a composition bias toward low complexity. At Ser-345 the chain carries Phosphoserine; by MAPK. Residue Lys-388 forms a Glycyl lysine isopeptide (Lys-Gly) (interchain with G-Cter in SUMO); alternate linkage. Lys-388 is covalently cross-linked (Glycyl lysine isopeptide (Lys-Gly) (interchain with G-Cter in ubiquitin); alternate). At Ser-400 the chain carries Phosphoserine; by CDK2. Residues 418–430 (PLGPPPPLPPRAP) are compositionally biased toward pro residues. Residues 418 to 438 (PLGPPPPLPPRAPPTRAGEAA) are disordered. An AF1; mediates transcriptional activation region spans residues 456-548 (STLECILYKA…VYPPYLNYLR (93 aa)). Lys-533 participates in a covalent cross-link: Glycyl lysine isopeptide (Lys-Gly) (interchain with G-Cter in SUMO). 2 consecutive NR C4-type zinc fingers follow at residues 569–589 (CLIC…CGSC) and 605–629 (CAGR…LRKC). The nuclear receptor DNA-binding region spans 569–641 (CLICGDEASG…AGMVLGGRKF (73 aa)). A Phosphoserine modification is found at Ser-678. Positions 681-915 (QDIQLIPPLI…EFPEMMSEVI (235 aa)) constitute an NR LBD domain. The interval 689-935 (LINLLMSIEP…MVKPLLFHKK (247 aa)) is AF2; mediates transcriptional activation.

Belongs to the nuclear hormone receptor family. As to quaternary structure, interacts with SMARD1 and UNC45A. Interacts with CUEDC2; the interaction promotes ubiquitination, decreases sumoylation, and represses transcriptional activity. Interacts with PIAS3; the interaction promotes sumoylation of PR in a hormone-dependent manner, inhibits DNA-binding, and alters nuclear export. Interacts with SP1; the interaction requires ligand-induced phosphorylation on Ser-345 by ERK1/2-MAPK. Interacts with PRMT2. Interacts with NCOA2 and NCOA1. Interacts with KLF9. Interacts with GTF2B. Post-translationally, phosphorylated on multiple serine sites. Several of these sites are hormone-dependent. Phosphorylation on Ser-294 is highly hormone-dependent and modulates ubiquitination and sumoylation on Lys-388. Phosphorylation on Ser-102 and Ser-345 also requires induction by hormone. Basal phosphorylation on Ser-81, Ser-162, Ser-190 and Ser-400 is increased in response to progesterone and can be phosphorylated in vitro by the CDK2-A1 complex. Increased levels of phosphorylation on Ser-400 also in the presence of EGF, heregulin, IGF, PMA and FBS. Phosphorylation at this site by CDK2 is ligand-independent, and increases nuclear translocation and transcriptional activity. Phosphorylation at Ser-162 and Ser-294, but not at Ser-190, is impaired during the G(2)/M phase of the cell cycle. Phosphorylation on Ser-345 by ERK1/2 MAPK is required for interaction with SP1. Sumoylation is hormone-dependent and represses transcriptional activity. Sumoylation on all three sites is enhanced by PIAS3. Desumoylated by SENP1. Sumoylation on Lys-388, the main site of sumoylation, is repressed by ubiquitination on the same site, and modulated by phosphorylation at Ser-294. In terms of processing, ubiquitination is hormone-dependent and represses sumoylation on the same site. Promoted by MAPK-mediated phosphorylation on Ser-294. Post-translationally, palmitoylated by ZDHHC7 and ZDHHC21. Palmitoylation is required for plasma membrane targeting and for rapid intracellular signaling via ERK and AKT kinases and cAMP generation.

Its subcellular location is the nucleus. The protein localises to the cytoplasm. The steroid hormones and their receptors are involved in the regulation of eukaryotic gene expression and affect cellular proliferation and differentiation in target tissues. Transcriptional activator of several progesteron-dependent promoters in a variety of cell types. Involved in activation of SRC-dependent MAPK signaling on hormone stimulation. This chain is Progesterone receptor (PGR), found in Pongo pygmaeus (Bornean orangutan).